Reading from the N-terminus, the 220-residue chain is UPF0758 protein CKO_05095 (220 aa).

The MPN domain maps to 98 to 220; it reads ALLSPEMTRE…YVSFAERGWI (123 aa). The Zn(2+) site is built by His-169, His-171, and Asp-182. Positions 169–182 match the JAMM motif motif; sequence HNHPSGCAEPSKAD.

Belongs to the UPF0758 family. YicR subfamily.

The polypeptide is UPF0758 protein CKO_05095 (Citrobacter koseri (strain ATCC BAA-895 / CDC 4225-83 / SGSC4696)).